The chain runs to 144 residues: Gastric inhibitory polypeptide (144 aa).

The first 21 residues, M1 to G21, serve as a signal peptide directing secretion. 2 propeptides span residues E22–P42 and E87–Q144. Residues E92–K112 form a disordered region.

Belongs to the glucagon family. As to expression, highly expressed in the duodenum and jejunum.

The protein localises to the secreted. Its function is as follows. Potent stimulator of insulin secretion and relatively poor inhibitor of gastric acid secretion. This Rattus norvegicus (Rat) protein is Gastric inhibitory polypeptide (Gip).